The chain runs to 371 residues: uncharacterized protein (371 aa).

It to A.pernix APE_1804 and S.solfataricus SSO2105.

This is an uncharacterized protein from Aeropyrum pernix (strain ATCC 700893 / DSM 11879 / JCM 9820 / NBRC 100138 / K1).